A 953-amino-acid polypeptide reads, in one-letter code: Coatomer subunit beta (953 aa).

HEAT repeat units lie at residues 17 to 54 (DSEP…NGEK), 96 to 131 (QEMI…KEAE), 132 to 168 (LLEP…NFEH), 240 to 276 (SERA…SAPT), 277 to 314 (AIKA…HPSH), 316 to 353 (RVLQ…SRNV), and 396 to 433 (DMAA…RFDN).

In terms of assembly, oligomeric complex that consists of at least the alpha, beta, beta', gamma, delta, epsilon and zeta subunits.

The protein localises to the cytoplasm. The protein resides in the golgi apparatus membrane. Its subcellular location is the cytoplasmic vesicle. It is found in the COPI-coated vesicle membrane. In terms of biological role, the coatomer is a cytosolic protein complex that binds to dilysine motifs and reversibly associates with Golgi non-clathrin-coated vesicles, which further mediate biosynthetic protein transport from the ER, via the Golgi up to the trans Golgi network. Coatomer complex is required for budding from Golgi membranes, and is essential for the retrograde Golgi-to-ER transport of dilysine-tagged proteins. In Gallus gallus (Chicken), this protein is Coatomer subunit beta (COPB1).